We begin with the raw amino-acid sequence, 149 residues long: Macrodomain Ter protein (149 aa).

Belongs to the MatP family. In terms of assembly, homodimer.

The protein localises to the cytoplasm. Its function is as follows. Required for spatial organization of the terminus region of the chromosome (Ter macrodomain) during the cell cycle. Prevents early segregation of duplicated Ter macrodomains during cell division. Binds specifically to matS, which is a 13 bp signature motif repeated within the Ter macrodomain. The chain is Macrodomain Ter protein from Vibrio campbellii (strain ATCC BAA-1116).